The following is a 192-amino-acid chain: Ubiquitin-conjugating enzyme E2 27 (192 aa).

The region spanning 2 to 150 is the UBC core domain; it reads IDFSRIQKEL…ARYWTETFAK (149 aa). The active-site Glycyl thioester intermediate is the Cys-88. One can recognise a UBA domain in the interval 153–192; it reads SLEEKVKRLVEMGFGDAQVRSAIESSGGDENLALEKLCSA.

It belongs to the ubiquitin-conjugating enzyme family. In terms of tissue distribution, expressed in seeds, pistils, siliques, hypocotyls and leaves.

The catalysed reaction is S-ubiquitinyl-[E1 ubiquitin-activating enzyme]-L-cysteine + [E2 ubiquitin-conjugating enzyme]-L-cysteine = [E1 ubiquitin-activating enzyme]-L-cysteine + S-ubiquitinyl-[E2 ubiquitin-conjugating enzyme]-L-cysteine.. Its pathway is protein modification; protein ubiquitination. Its function is as follows. Accepts the ubiquitin from the E1 complex and catalyzes its covalent attachment to other proteins. The sequence is that of Ubiquitin-conjugating enzyme E2 27 (UBC27) from Arabidopsis thaliana (Mouse-ear cress).